Consider the following 677-residue polypeptide: DNA polymerase epsilon subunit B (677 aa).

The protein belongs to the DNA polymerase epsilon subunit B family. Heterotetramer. Consists of four subunits: POL2, DPB2, DPB3 and DPB4.

The protein localises to the nucleus. Its function is as follows. As accessory component of the DNA polymerase epsilon (DNA polymerase II) participates in chromosomal DNA replication. The sequence is that of DNA polymerase epsilon subunit B (DPB2) from Eremothecium gossypii (strain ATCC 10895 / CBS 109.51 / FGSC 9923 / NRRL Y-1056) (Yeast).